The sequence spans 111 residues: Large ribosomal subunit protein uL22 (111 aa).

The protein belongs to the universal ribosomal protein uL22 family. Part of the 50S ribosomal subunit.

This protein binds specifically to 23S rRNA; its binding is stimulated by other ribosomal proteins, e.g. L4, L17, and L20. It is important during the early stages of 50S assembly. It makes multiple contacts with different domains of the 23S rRNA in the assembled 50S subunit and ribosome. In terms of biological role, the globular domain of the protein is located near the polypeptide exit tunnel on the outside of the subunit, while an extended beta-hairpin is found that lines the wall of the exit tunnel in the center of the 70S ribosome. In Chlamydia felis (strain Fe/C-56) (Chlamydophila felis), this protein is Large ribosomal subunit protein uL22.